The chain runs to 1249 residues: Fanconi anemia group J protein (1249 aa).

The Helicase ATP-binding domain maps to 11–442 (GGVKIYFPYK…KDHEPLRAVC (432 aa)). The segment covering 102 to 127 (QGTSRHFNYPSTPPSERNGTSSTCQD) has biased composition (polar residues). Positions 102-131 (QGTSRHFNYPSTPPSERNGTSSTCQDSPEK) are disordered. A Nuclear localization signal motif is present at residues 158 to 175 (KKRIRPLETTQQIRKRHC). 185–192 (AKVDSGKT) serves as a coordination point for ATP. [4Fe-4S] cluster contacts are provided by Cys283, Cys298, Cys310, and Cys350. A DEAH box motif is present at residues 393–396 (DEAH). Ser505, Ser927, Ser930, Ser956, Ser990, Ser1004, and Ser1032 each carry phosphoserine. An interaction with BRCA1 region spans residues 888–1063 (HQKVLNVSIK…ESSNLTVNTS (176 aa)). Disordered regions lie at residues 1018–1042 (KATPELGSSENSASSPPRFKTEKME) and 1108–1127 (VSEEDKQSTSNRDFETEAED). Residues 1023-1032 (LGSSENSASS) show a composition bias toward polar residues. Residues 1110 to 1122 (EEDKQSTSNRDFE) are compositionally biased toward basic and acidic residues. Ser1237 is subject to Phosphoserine. Lys1249 is modified (N6-acetyllysine).

Belongs to the DEAD box helicase family. DEAH subfamily. Interacts with the replication protein A complex (RPA) via the RPA1 subunit; following DNA damage they colocalize in foci in the nucleus. Binds directly to the BRCT domains of BRCA1. Interacts with the CIA complex components CIAO1, CIAO2B and MMS19. The cofactor is [4Fe-4S] cluster. Post-translationally, phosphorylated. Phosphorylation is necessary for interaction with BRCA1, and is cell-cycle regulated. Acetylation at Lys-1249 facilitates DNA end processing required for repair and checkpoint signaling. In terms of tissue distribution, ubiquitously expressed, with highest levels in testis.

Its subcellular location is the nucleus. The protein resides in the cytoplasm. It carries out the reaction Couples ATP hydrolysis with the unwinding of duplex DNA at the replication fork by translocating in the 5'-3' direction. This creates two antiparallel DNA single strands (ssDNA). The leading ssDNA polymer is the template for DNA polymerase III holoenzyme which synthesizes a continuous strand.. The catalysed reaction is ATP + H2O = ADP + phosphate + H(+). With respect to regulation, helicase activity on forked substrates is stimulated by replication protein A complex heterotrimer (RPA1, RPA2, RPA3). Helicase activity on G-quadruplex DNA is stimulated 3-fold by RPA, and inhibited by MSH2/MSH6. Unwinding of G-quadruplex DNA is inhibited by ATP-gamma-S and telomestatin (TMS); TMA does not inhibit unwinding of forked-duplex DNA. Helicase activity on dsDNA and G-quadruplex DNA is inhibited by porphyrin derivatives meso-tetra (N-methyl-4-pyridyl) porphine tetra tosylate (T4) and N-methyl mesoporphyrin IX (NMM). In terms of biological role, DNA-dependent ATPase and 5'-3' DNA helicase required for the maintenance of chromosomal stability. Acts late in the Fanconi anemia pathway, after FANCD2 ubiquitination. Involved in the repair of DNA double-strand breaks by homologous recombination in a manner that depends on its association with BRCA1. Involved in the repair of abasic sites at replication forks by promoting the degradation of DNA-protein cross-links: acts by catalyzing unfolding of HMCES DNA-protein cross-link via its helicase activity, exposing the underlying DNA and enabling cleavage of the DNA-protein adduct by the SPRTN metalloprotease. Can unwind RNA:DNA substrates. Unwinds G-quadruplex DNA; unwinding requires a 5'-single stranded tail. The sequence is that of Fanconi anemia group J protein from Homo sapiens (Human).